We begin with the raw amino-acid sequence, 488 residues long: Ribulose bisphosphate carboxylase large chain (488 aa).

Residues asparagine 127 and threonine 177 each contribute to the substrate site. Lysine 179 (proton acceptor) is an active-site residue. Lysine 181 is a substrate binding site. Lysine 205, aspartate 207, and glutamate 208 together coordinate Mg(2+). N6-carboxylysine is present on lysine 205. Histidine 297 serves as the catalytic Proton acceptor. Arginine 298, histidine 330, and serine 382 together coordinate substrate.

Belongs to the RuBisCO large chain family. Type I subfamily. In terms of assembly, heterohexadecamer of 8 large chains and 8 small chains. Requires Mg(2+) as cofactor.

The protein resides in the plastid. The protein localises to the chloroplast. It carries out the reaction 2 (2R)-3-phosphoglycerate + 2 H(+) = D-ribulose 1,5-bisphosphate + CO2 + H2O. The catalysed reaction is D-ribulose 1,5-bisphosphate + O2 = 2-phosphoglycolate + (2R)-3-phosphoglycerate + 2 H(+). Functionally, ruBisCO catalyzes two reactions: the carboxylation of D-ribulose 1,5-bisphosphate, the primary event in carbon dioxide fixation, as well as the oxidative fragmentation of the pentose substrate in the photorespiration process. Both reactions occur simultaneously and in competition at the same active site. The chain is Ribulose bisphosphate carboxylase large chain from Antithamnion sp. (Red alga).